The chain runs to 184 residues: TATA-box-binding protein (184 aa).

Tandem repeats lie at residues 9–85 (IENI…IDKL) and 100–178 (VQNI…KKEL).

This sequence belongs to the TBP family.

General factor that plays a role in the activation of archaeal genes transcribed by RNA polymerase. Binds specifically to the TATA box promoter element which lies close to the position of transcription initiation. In Thermoplasma acidophilum (strain ATCC 25905 / DSM 1728 / JCM 9062 / NBRC 15155 / AMRC-C165), this protein is TATA-box-binding protein (tbp).